A 623-amino-acid polypeptide reads, in one-letter code: Laccase-1 (623 aa).

The signal sequence occupies residues 1 to 22 (MKTFTSALALVVGMLAPGAVVA). A propeptide spanning residues 23 to 50 (APPSTPAQRDLVELREARQEGGKDLRPR) is cleaved from the precursor. A disulfide bond links Cys54 and Cys62. Asn89 and Asn138 each carry an N-linked (GlcNAc...) asparagine glycan. His143, His145, His188, and His190 together coordinate Cu cation. Intrachain disulfides connect Cys164–Cys590 and Cys348–Cys382. N-linked (GlcNAc...) asparagine glycans are attached at residues Asn251, Asn266, Asn294, and Asn339. N-linked (GlcNAc...) asparagine glycosylation is found at Asn426 and Asn446. Residues His481, His484, His486, His552, Cys553, His554, and His558 each contribute to the Cu cation site. Positions 610-623 (KRRRWVEESEWLVR) are excised as a propeptide.

This sequence belongs to the multicopper oxidase family. In terms of assembly, monomer. It depends on Cu cation as a cofactor. Secreted protein; extracellular space.

It carries out the reaction 4 hydroquinone + O2 = 4 benzosemiquinone + 2 H2O. Functionally, lignin degradation and detoxification of lignin-derived products. The chain is Laccase-1 (LAC1) from Melanocarpus albomyces.